Here is a 260-residue protein sequence, read N- to C-terminus: MINKVLLEGQRITRSPQVKQHACGASFFLVVLLLIGGLLYSTISWMWDEQRLPLSKLVLQGDLHYVSALDVQRVLARLDHIGTFMSQDINVLQESVQSIPWVSHASIRKQWPDTIKVYLTEYQVEALWNANALLDKNGTVFYGDIARVNGEYVKLYGPDGTAPQVLKAWRDYNPKFAQLGLNISSLVLNDRRAWQIILDNGIRLELGKESLEERISRFFLLYKQLGNKAEQVSYIDLRYDTGAAVGWFPEQELTQEKNDD.

Over 1 to 26 (MINKVLLEGQRITRSPQVKQHACGAS) the chain is Cytoplasmic. The helical transmembrane segment at 27 to 47 (FFLVVLLLIGGLLYSTISWMW) threads the bilayer. Over 48–260 (DEQRLPLSKL…QELTQEKNDD (213 aa)) the chain is Periplasmic. A POTRA domain is found at 52–122 (LPLSKLVLQG…DTIKVYLTEY (71 aa)).

The protein belongs to the FtsQ/DivIB family. FtsQ subfamily. In terms of assembly, part of a complex composed of FtsB, FtsL and FtsQ.

The protein resides in the cell inner membrane. Functionally, essential cell division protein. May link together the upstream cell division proteins, which are predominantly cytoplasmic, with the downstream cell division proteins, which are predominantly periplasmic. May control correct divisome assembly. The polypeptide is Cell division protein FtsQ (Vibrio cholerae serotype O1 (strain ATCC 39315 / El Tor Inaba N16961)).